The chain runs to 259 residues: Zinc import ATP-binding protein ZnuC (259 aa).

The ABC transporter domain occupies 22–238 (VEARGLTVRR…PEYRALFGAH (217 aa)). 54–61 (GPNGSGKS) is an ATP binding site.

This sequence belongs to the ABC transporter superfamily. Zinc importer (TC 3.A.1.15.5) family. The complex is composed of two ATP-binding proteins (ZnuC), two transmembrane proteins (ZnuB) and a solute-binding protein (ZnuA).

Its subcellular location is the cell inner membrane. It carries out the reaction Zn(2+)(out) + ATP(in) + H2O(in) = Zn(2+)(in) + ADP(in) + phosphate(in) + H(+)(in). Functionally, part of the ABC transporter complex ZnuABC involved in zinc import. Responsible for energy coupling to the transport system. The chain is Zinc import ATP-binding protein ZnuC from Alkalilimnicola ehrlichii (strain ATCC BAA-1101 / DSM 17681 / MLHE-1).